The chain runs to 105 residues: Small ribosomal subunit protein uS10 (105 aa).

It belongs to the universal ribosomal protein uS10 family. As to quaternary structure, part of the 30S ribosomal subunit.

Involved in the binding of tRNA to the ribosomes. This chain is Small ribosomal subunit protein uS10, found in Phytoplasma australiense.